Here is a 705-residue protein sequence, read N- to C-terminus: MGQEKHVFSIDWAGRKLTVETGQLAKQANGAVMVRYGDTAVLSTATASKEPKTVDFFPLTVNYEERLYAVGKIPGGFIKREGRPSEKAILASRLIDRPIRPLFADGFRNEVQVVSIVMSVDQDCSSEMAAMFGSSLALCVSDIPFEGPIAGVTVGRVDNKFIINPTLEQLEKSDIHLVVAGTKDAINMVEAGADEVPEEIMLEAIMFGHEEIKRLIAFQEEIVAAVGKEKSEITLYEIDSDLKEKVRGMAESNLLKAIQVHEKHAREDAISEVKNEVLAKFEEEEHDEETLKQVKDILSQLVKNEVRRLITEEKVRPDGRAVDEIRPLSSEVGLLPRTHGSGLFTRGQTQALSICTLGALGDVQILDGLGVEESKRFMHHYNFPQFSVGETGPMRGPGRREIGHGALGERALEPIVPSEKDFPYTIRLVSEVLESNGSTSQASICASTLAMMDAGVPIKAPVAGIAMGLVKSGDNYTVLTDIQGMEDHLGDMDFKVAGTSKGVTALQMDIKIEGLSREILEEALQQAKKGRMEILESMLSTLAESRKELSPYAPKILTMSINPDKIRDVIGPSGKQINKIIEDTGVKIDIEQDGTIFISSTDESMNQKAKKIIEDLVREVEVGQLYLGKVKRIEKFGAFVELFSGKDGLVHISELALERVGKVEDVVKIGDELLVKVTEIDKQGRVNLSRKAVLREQKEKEEQKS.

Mg(2+)-binding residues include Asp487 and Asp493. Positions 554-613 (PKILTMSINPDKIRDVIGPSGKQINKIIEDTGVKIDIEQDGTIFISSTDESMNQKAKKII) constitute a KH domain. Residues 623 to 691 (GQLYLGKVKR…KQGRVNLSRK (69 aa)) enclose the S1 motif domain.

It belongs to the polyribonucleotide nucleotidyltransferase family. Mg(2+) is required as a cofactor.

The protein resides in the cytoplasm. It catalyses the reaction RNA(n+1) + phosphate = RNA(n) + a ribonucleoside 5'-diphosphate. Involved in mRNA degradation. Catalyzes the phosphorolysis of single-stranded polyribonucleotides processively in the 3'- to 5'-direction. The protein is Polyribonucleotide nucleotidyltransferase of Bacillus licheniformis (strain ATCC 14580 / DSM 13 / JCM 2505 / CCUG 7422 / NBRC 12200 / NCIMB 9375 / NCTC 10341 / NRRL NRS-1264 / Gibson 46).